A 487-amino-acid polypeptide reads, in one-letter code: N-succinylglutamate 5-semialdehyde dehydrogenase (487 aa).

221 to 226 (GSSRTG) lines the NAD(+) pocket. Residues Glu-244 and Cys-278 contribute to the active site.

The protein belongs to the aldehyde dehydrogenase family. AstD subfamily.

The enzyme catalyses N-succinyl-L-glutamate 5-semialdehyde + NAD(+) + H2O = N-succinyl-L-glutamate + NADH + 2 H(+). The protein operates within amino-acid degradation; L-arginine degradation via AST pathway; L-glutamate and succinate from L-arginine: step 4/5. In terms of biological role, catalyzes the NAD-dependent reduction of succinylglutamate semialdehyde into succinylglutamate. The protein is N-succinylglutamate 5-semialdehyde dehydrogenase of Pseudomonas putida (strain GB-1).